The following is a 203-amino-acid chain: Urease accessory protein UreG (203 aa).

GTP is bound at residue 14-21 (GPVGSGKT).

Belongs to the SIMIBI class G3E GTPase family. UreG subfamily. Homodimer. UreD, UreF and UreG form a complex that acts as a GTP-hydrolysis-dependent molecular chaperone, activating the urease apoprotein by helping to assemble the nickel containing metallocenter of UreC. The UreE protein probably delivers the nickel.

The protein localises to the cytoplasm. Functionally, facilitates the functional incorporation of the urease nickel metallocenter. This process requires GTP hydrolysis, probably effectuated by UreG. The chain is Urease accessory protein UreG from Allorhizobium ampelinum (strain ATCC BAA-846 / DSM 112012 / S4) (Agrobacterium vitis (strain S4)).